The primary structure comprises 504 residues: Cobyric acid synthase (504 aa).

Positions 254-442 constitute a GATase cobBQ-type domain; sequence AIDVAVIRYP…MHDLFHNDMF (189 aa). Cysteine 336 (nucleophile) is an active-site residue. The active site involves histidine 434.

The protein belongs to the CobB/CobQ family. CobQ subfamily.

It participates in cofactor biosynthesis; adenosylcobalamin biosynthesis. Its function is as follows. Catalyzes amidations at positions B, D, E, and G on adenosylcobyrinic A,C-diamide. NH(2) groups are provided by glutamine, and one molecule of ATP is hydrogenolyzed for each amidation. This Anoxybacillus flavithermus (strain DSM 21510 / WK1) protein is Cobyric acid synthase.